The primary structure comprises 783 residues: RNA exonuclease 5 (783 aa).

Positions 230 to 378 (LFGLDCEMCL…EDARTTLELA (149 aa)) constitute an Exonuclease domain. 2 consecutive RRM domains span residues 503 to 577 (STVY…RPVT) and 598 to 677 (GTIY…RHLH).

The sequence is that of RNA exonuclease 5 (REXO5) from Bos taurus (Bovine).